Here is a 148-residue protein sequence, read N- to C-terminus: Hemoglobin subunit beta (148 aa).

A Globin domain is found at 3–148 (XWTDXERAAI…VVSALGRQYH (146 aa)). Histidine 64 and histidine 93 together coordinate heme b.

Belongs to the globin family. In terms of assembly, heterotetramer of two alpha chains and two beta chains. In terms of tissue distribution, red blood cells.

Its function is as follows. Involved in oxygen transport from gills to the various peripheral tissues. The chain is Hemoglobin subunit beta (hbb) from Decapterus maruadsi (Japanese scad).